The primary structure comprises 208 residues: RNA-binding protein KhpB (208 aa).

The tract at residues 5–55 is jag_N domain; sequence TAAGRNVDEAVQSGLQELGLTKDKVEITVIEEGNKGFLGIFGKKPAIVKLV. Residues 58 to 135 enclose the KH domain; that stretch reads IDPIQQAKLY…GQYKNVTVDA (78 aa). One can recognise an R3H domain in the interval 140–208; the sequence is LKRKETLSQL…NRHLVISHKR (69 aa).

The protein belongs to the KhpB RNA-binding protein family. As to quaternary structure, forms a complex with KhpA.

Its subcellular location is the cytoplasm. Its function is as follows. A probable RNA chaperone. Forms a complex with KhpA which binds to cellular RNA and controls its expression. Plays a role in peptidoglycan (PG) homeostasis and cell length regulation. In Bacillus subtilis (strain 168), this protein is RNA-binding protein KhpB.